Consider the following 228-residue polypeptide: PKHD-type hydroxylase XAC2942 (228 aa).

Residues 78–180 (RIYPPLFNRY…RVACFFWAQS (103 aa)) form the Fe2OG dioxygenase domain. Fe cation-binding residues include histidine 96, aspartate 98, and histidine 161. Arginine 171 provides a ligand contact to 2-oxoglutarate.

The cofactor is Fe(2+). Requires L-ascorbate as cofactor.

This chain is PKHD-type hydroxylase XAC2942, found in Xanthomonas axonopodis pv. citri (strain 306).